The following is a 407-amino-acid chain: Ribonuclease Z (407 aa).

A ribonuclease Z region spans residues 1–308 (MEITFLGTSS…QDFLHYAIPR (308 aa)). Positions 62, 64, 66, 67, 139, 210, and 268 each coordinate Zn(2+). Aspartate 66 serves as the catalytic Proton acceptor. Residues 309-407 (DGQICAEMPP…VDWSALNVLF (99 aa)) are unknown.

Belongs to the RNase Z family. In terms of assembly, homodimer. Requires Zn(2+) as cofactor.

The enzyme catalyses Endonucleolytic cleavage of RNA, removing extra 3' nucleotides from tRNA precursor, generating 3' termini of tRNAs. A 3'-hydroxy group is left at the tRNA terminus and a 5'-phosphoryl group is left at the trailer molecule.. Zinc phosphodiesterase, which displays some tRNA 3'-processing endonuclease activity. Probably involved in tRNA maturation, by removing a 3'-trailer from precursor tRNA. This Thermosynechococcus vestitus (strain NIES-2133 / IAM M-273 / BP-1) protein is Ribonuclease Z (rnz).